The following is a 101-amino-acid chain: Eukaryotic translation initiation factor 4E-binding protein 3 (101 aa).

Positions 1 to 28 (MSSSTSCPIPGCRDQLPDGYSTTPGGTL) are disordered. A YXXXXLphi motif motif is present at residues 40–46 (YDRKFLL). The short motif at 97-101 (FEMDM) is the TOS motif element.

It belongs to the eIF4E-binding protein family. Interacts with EIF4E. Interacts with RPA2 (via N-terminus); the interaction enhances EIF4EBP3-mediated inhibition of EIF4E-mediated mRNA nuclear export. In terms of processing, phosphorylated.

Its subcellular location is the cytoplasm. The protein localises to the nucleus. Its function is as follows. Repressor of translation initiation that regulates EIF4E activity by preventing its assembly into the eIF4F complex: the hypophosphorylated form competes with EIF4G1/EIF4G3 and strongly binds to EIF4E, leading to repression of translation. In contrast, the hyperphosphorylated form dissociates from EIF4E, allowing interaction between EIF4G1/EIF4G3 and EIF4E, leading to initiation of translation. Inhibits EIF4E-mediated mRNA nuclear export. The protein is Eukaryotic translation initiation factor 4E-binding protein 3 (Eif4ebp3) of Mus musculus (Mouse).